A 437-amino-acid polypeptide reads, in one-letter code: Zinc finger protein 491 (437 aa).

A C2H2-type 1; degenerate zinc finger spans residues 35–59 (KSCESGTCGEIFMGYSSFNRNIRTD). Residues 103 to 125 (FDCKECEKSFISPASIRRYMVTH) form a C2H2-type 2; degenerate zinc finger. 11 consecutive C2H2-type zinc fingers follow at residues 131–153 (YKCKFCGKALDCLSLYLTHERTH), 159–181 (YECKQCGKAFSWHSSVRIHERTH), 187–209 (YECKECGKSFNFSSSFRRHERTH), 215–237 (YKCKECGKAFNCPSSFHRHERTH), 243–265 (YECKLYGKALSRLISFRRHMRMH), 271–293 (HKCKICGKAFYSPSSFQRHERSH), 299–321 (YKCKQCGKAFTCSTSFQYHERTH), 327–349 (DGCKQCGKAFRSAKYIRIHGRTH), 355–377 (YECKQCGKAFHCVSSFHRHERTH), 383–405 (YECKHCGKAFTCSIYIRIHERIH), and 411–433 (YQCKECGKAFIRSSYCRKHERTH).

It belongs to the krueppel C2H2-type zinc-finger protein family.

It localises to the nucleus. Its function is as follows. May be involved in transcriptional regulation. This chain is Zinc finger protein 491 (ZNF491), found in Homo sapiens (Human).